The sequence spans 185 residues: MINEIKEDAKSRMAKCVEATKNQMAKVRTGRAHPSLLDSIKVPYYGTPTPLKQVGNVSIEDSRTLAITVFDTTMIAAVEKAIMSSDLGLNPMSAGTTIRIPLPALTEERRKDLIKVVRAEAENGRIAVRNVRRDANSDVKALEKEKECTEDDVRRTEDEIQKFTDAHIKQIDEILTAKEAELMEV.

It belongs to the RRF family.

It is found in the cytoplasm. Responsible for the release of ribosomes from messenger RNA at the termination of protein biosynthesis. May increase the efficiency of translation by recycling ribosomes from one round of translation to another. In Shewanella loihica (strain ATCC BAA-1088 / PV-4), this protein is Ribosome-recycling factor.